A 451-amino-acid polypeptide reads, in one-letter code: MQDIIGKIEDYSSKNGILLPDPVVEYVARIADEEKLKEPELQEMVRLFSRIAERNQGLDDDELLDAVEDDYQRILKVQELVKRKRARFPPKLIEDIAEVMKKHELSDDELDELIRRVRRAYDRARVEAGEAVGTVAAQSVGEPGTQMTMRTFHYAGVAELNVTLGLPRLIEIVDARKKISTPTMSIYFEGDLRYDEEFVRRKANKIGKSTLNDVLKNFSIQYADMSVVAELDEEKIQEKHLEYDEILAKVEKTFKKVEIDNNILRFEPPKPTIRELRLLADKVRKLQISGVKNIGKVVIRKEDDEWVIHTEGSNLGAVLKEEGVDKVRTTTNDIHEIETVLGIEAARNAIIHEAKRTMEEQGLTVDIRHIMLVADMMTADGSVKSIGRHGISGEKASVLARASFEETGKHLLRASIRGEVDHLTGIIENIIIGQPIPLGTGSVSVVMKERK.

The segment at 1 to 68 (MQDIIGKIED…DDDELLDAVE (68 aa)) is unknown. Residues 69–451 (DDYQRILKVQ…SVSVVMKERK (383 aa)) form a DNA-directed RNA polymerase subunit Rpo1C region.

It belongs to the RNA polymerase beta' chain family. In terms of assembly, part of the RNA polymerase complex.

It localises to the cytoplasm. It catalyses the reaction RNA(n) + a ribonucleoside 5'-triphosphate = RNA(n+1) + diphosphate. DNA-dependent RNA polymerase (RNAP) catalyzes the transcription of DNA into RNA using the four ribonucleoside triphosphates as substrates. Forms part of the jaw domain. This Methanothermobacter thermautotrophicus (strain ATCC 29096 / DSM 1053 / JCM 10044 / NBRC 100330 / Delta H) (Methanobacterium thermoautotrophicum) protein is DNA-directed RNA polymerase subunit Rpo1C.